The chain runs to 422 residues: Histidine--tRNA ligase (422 aa).

The protein belongs to the class-II aminoacyl-tRNA synthetase family. In terms of assembly, homodimer.

It localises to the cytoplasm. The enzyme catalyses tRNA(His) + L-histidine + ATP = L-histidyl-tRNA(His) + AMP + diphosphate + H(+). This chain is Histidine--tRNA ligase, found in Vesicomyosocius okutanii subsp. Calyptogena okutanii (strain HA).